A 237-amino-acid chain; its full sequence is 1-(5-phosphoribosyl)-5-[(5-phosphoribosylamino)methylideneamino] imidazole-4-carboxamide isomerase (237 aa).

The active-site Proton acceptor is aspartate 8. Catalysis depends on aspartate 128, which acts as the Proton donor.

Belongs to the HisA/HisF family.

Its subcellular location is the cytoplasm. It carries out the reaction 1-(5-phospho-beta-D-ribosyl)-5-[(5-phospho-beta-D-ribosylamino)methylideneamino]imidazole-4-carboxamide = 5-[(5-phospho-1-deoxy-D-ribulos-1-ylimino)methylamino]-1-(5-phospho-beta-D-ribosyl)imidazole-4-carboxamide. It functions in the pathway amino-acid biosynthesis; L-histidine biosynthesis; L-histidine from 5-phospho-alpha-D-ribose 1-diphosphate: step 4/9. This Gemmatimonas aurantiaca (strain DSM 14586 / JCM 11422 / NBRC 100505 / T-27) protein is 1-(5-phosphoribosyl)-5-[(5-phosphoribosylamino)methylideneamino] imidazole-4-carboxamide isomerase.